Here is a 184-residue protein sequence, read N- to C-terminus: Large ribosomal subunit protein eL18 (184 aa).

This sequence belongs to the eukaryotic ribosomal protein eL18 family.

The protein resides in the cytoplasm. The protein is Large ribosomal subunit protein eL18 (RPL18) of Theileria parva (East coast fever infection agent).